Reading from the N-terminus, the 70-residue chain is Brevinin-1PLc (70 aa).

An N-terminal signal peptide occupies residues 1 to 22 (MFTLKKSMLLLFFLGTINLSLC). A propeptide spanning residues 23–44 (EEERNAEEERRDEPDEMDVEVE) is cleaved from the precursor. A disulfide bridge connects residues Cys64 and Cys70.

Expressed by the skin glands.

Its subcellular location is the secreted. Its function is as follows. Antimicrobial activity against the Gram-negative bacterium E.coli, the Gram-positive bacterium S.aureus and the yeast C.albicans. The sequence is that of Brevinin-1PLc from Lithobates palustris (Pickerel frog).